The primary structure comprises 506 residues: Cytochrome P450 6a8 (506 aa).

A heme-binding site is contributed by Cys451.

Belongs to the cytochrome P450 family. Heme is required as a cofactor.

The protein resides in the endoplasmic reticulum membrane. Its subcellular location is the microsome membrane. In terms of biological role, involved in the metabolism of insect hormones and in the breakdown of synthetic insecticides. The chain is Cytochrome P450 6a8 (Cyp6a8) from Drosophila melanogaster (Fruit fly).